Reading from the N-terminus, the 214-residue chain is Ras-related protein Rab-17 (214 aa).

Phosphoserine is present on S29. Residues G31, K32, T33, and T50 each contribute to the GTP site. Residues T33, T50, and D73 each coordinate Mg(2+). The short motif at 43–54 (DFSNVLPTVGCA) is the Switch 1 element. The short motif at 75-91 (AGQEKYQSVCHLYFRGA) is the Switch 2 element. 5 residues coordinate GTP: G76, N132, K133, D135, and A163. The tract at residues 183 to 204 (RAGDTGSSRPQEGEAVALNQEP) is disordered. S-geranylgeranyl cysteine attachment occurs at residues C211 and C212.

The protein belongs to the small GTPase superfamily. Rab family. Mg(2+) serves as cofactor. In terms of tissue distribution, expressed in kidney, liver, and intestine mainly by epithelial cells. Expressed in hippocampus (at protein level).

The protein localises to the recycling endosome membrane. It localises to the melanosome. Its subcellular location is the cell projection. The protein resides in the dendrite. The enzyme catalyses GTP + H2O = GDP + phosphate + H(+). Its activity is regulated as follows. Regulated by guanine nucleotide exchange factors (GEFs) which promote the exchange of bound GDP for free GTP. Regulated by GTPase activating proteins (GAPs) which increase the GTP hydrolysis activity. Inhibited by GDP dissociation inhibitors (GDIs). Its function is as follows. The small GTPases Rab are key regulators of intracellular membrane trafficking, from the formation of transport vesicles to their fusion with membranes. Rabs cycle between an inactive GDP-bound form and an active GTP-bound form that is able to recruit to membranes different set of downstream effectors directly responsible for vesicle formation, movement, tethering and fusion. RAB17 is involved in transcytosis, the directed movement of endocytosed material through the cell and its exocytosis from the plasma membrane at the opposite side. Mainly observed in epithelial cells, transcytosis mediates, for instance, the transcellular transport of immunoglobulins from the basolateral surface to the apical surface. Most probably controls membrane trafficking through apical recycling endosomes in a post-endocytic step of transcytosis. Required for melanosome transport and release from melanocytes, it also regulates dendrite and dendritic spine development. May also play a role in cell migration. This Mus musculus (Mouse) protein is Ras-related protein Rab-17.